The sequence spans 272 residues: tRNA (guanine-N(7)-)-methyltransferase (272 aa).

Basic and acidic residues predominate over residues 1 to 20; that stretch reads MSTDSESKRRAYREEKEGAR. Positions 1 to 43 are disordered; the sequence is MSTDSESKRRAYREEKEGARKKSVKLAPEATPESKPDLPRKRY. S-adenosyl-L-methionine-binding positions include Gly-89, 112-113, 148-149, and Cys-168; these read EI and NA. Asp-171 is an active-site residue. 246–248 contributes to the S-adenosyl-L-methionine binding site; the sequence is TEE.

Belongs to the class I-like SAM-binding methyltransferase superfamily. TrmB family. In terms of assembly, forms a complex with TRM82.

Its subcellular location is the nucleus. It carries out the reaction guanosine(46) in tRNA + S-adenosyl-L-methionine = N(7)-methylguanosine(46) in tRNA + S-adenosyl-L-homocysteine. It participates in tRNA modification; N(7)-methylguanine-tRNA biosynthesis. Catalyzes the formation of N(7)-methylguanine at position 46 (m7G46) in tRNA. The polypeptide is tRNA (guanine-N(7)-)-methyltransferase (Meyerozyma guilliermondii (strain ATCC 6260 / CBS 566 / DSM 6381 / JCM 1539 / NBRC 10279 / NRRL Y-324) (Yeast)).